The chain runs to 177 residues: Adenine phosphoribosyltransferase (177 aa).

This sequence belongs to the purine/pyrimidine phosphoribosyltransferase family. As to quaternary structure, homodimer.

It is found in the cytoplasm. The catalysed reaction is AMP + diphosphate = 5-phospho-alpha-D-ribose 1-diphosphate + adenine. It functions in the pathway purine metabolism; AMP biosynthesis via salvage pathway; AMP from adenine: step 1/1. In terms of biological role, catalyzes a salvage reaction resulting in the formation of AMP, that is energically less costly than de novo synthesis. This Synechococcus sp. (strain RCC307) protein is Adenine phosphoribosyltransferase.